We begin with the raw amino-acid sequence, 431 residues long: Protein translocase subunit SecY 1 (431 aa).

10 helical membrane-spanning segments follow: residues 18-38, 67-87, 115-135, 150-170, 178-198, 215-235, 268-288, 312-332, 365-385, and 392-412; these read IYFT…TVPG, YSIF…IQLL, YLTL…FNAL, VEIA…GDEI, GVSV…LYQI, ILFF…VTWV, VIPV…LMAF, GVII…FVQV, LIKL…LPQL, and LPSS…VVLE.

It belongs to the SecY/SEC61-alpha family. In terms of assembly, component of the Sec protein translocase complex. Heterotrimer consisting of SecY, SecE and SecG subunits. The heterotrimers can form oligomers, although 1 heterotrimer is thought to be able to translocate proteins. Interacts with the ribosome. Interacts with SecDF, and other proteins may be involved. Interacts with SecA.

It is found in the cell membrane. The central subunit of the protein translocation channel SecYEG. Consists of two halves formed by TMs 1-5 and 6-10. These two domains form a lateral gate at the front which open onto the bilayer between TMs 2 and 7, and are clamped together by SecE at the back. The channel is closed by both a pore ring composed of hydrophobic SecY resides and a short helix (helix 2A) on the extracellular side of the membrane which forms a plug. The plug probably moves laterally to allow the channel to open. The ring and the pore may move independently. The chain is Protein translocase subunit SecY 1 from Lactobacillus kefiranofaciens subsp. kefiranofaciens.